Reading from the N-terminus, the 256-residue chain is 5-oxoprolinase subunit A (256 aa).

It belongs to the LamB/PxpA family. In terms of assembly, forms a complex composed of PxpA, PxpB and PxpC.

It carries out the reaction 5-oxo-L-proline + ATP + 2 H2O = L-glutamate + ADP + phosphate + H(+). In terms of biological role, catalyzes the cleavage of 5-oxoproline to form L-glutamate coupled to the hydrolysis of ATP to ADP and inorganic phosphate. The polypeptide is 5-oxoprolinase subunit A (Geobacillus thermodenitrificans (strain NG80-2)).